The chain runs to 912 residues: DNA (cytosine-5)-methyltransferase 3A (912 aa).

Disordered regions lie at residues 1–178 and 221–286; these read MPAM…GWES and IAGM…EYED. The span at 17 to 40 shows a compositional bias: basic and acidic residues; that stretch reads AEREEDRKDGEEQEEPRGKEERQE. Residues 47 to 57 show a composition bias toward basic residues; that stretch reads KVGRPGRKRKH. Positions 74-83 are enriched in polar residues; sequence KSPSMAQDSG. Phosphoserine is present on Ser105. Positions 113–128 are enriched in low complexity; that stretch reads GAPAEGEGAAETLPEA. At Thr124 the chain carries Phosphothreonine. Over residues 149-167 the composition is skewed to basic and acidic residues; that stretch reads AGKEQKETNIESMKMEGSR. A Glycyl lysine isopeptide (Lys-Gly) (interchain with G-Cter in SUMO2) cross-link involves residue Lys162. Residue Arg171 is modified to Omega-N-methylarginine. Residues 199–403 form an interaction with DNMT1 and DNMT3B region; sequence SKRKRDEWLA…DTAKAVEVQN (205 aa). 2 positions are modified to phosphoserine: Ser243 and Ser255. Positions 246–260 are enriched in polar residues; it reads AVQQPTDPASPTVAT. Thr261 carries the post-translational modification Phosphothreonine. A Phosphoserine modification is found at Ser267. Residues 269-279 show a composition bias toward basic and acidic residues; that stretch reads AGDKNATKAGD. Positions 292-350 constitute a PWWP domain; the sequence is IGELVWGKLRGFSWWPGRIVSWWMTGRSRAAEGTRWVMWFGDGKFSVVCVEKLMPLSSF. 2 positions are modified to phosphoserine: Ser390 and Ser393. The disordered stretch occupies residues 447 to 466; the sequence is AYAPPPPAKKPRKSTAEKPK. Residues 482–614 form the ADD domain; that stretch reads EVRQKCRNIE…LQMFFANNHD (133 aa). A GATA-type; atypical zinc finger spans residues 493–523; the sequence is ICISCGSLNVTLEHPLFVGGMCQNCKNCFLE. Residues 494 to 586 form an interaction with the PRC2/EED-EZH2 complex region; that stretch reads CISCGSLNVT…KEDPWNCYMC (93 aa). The segment at 534–590 adopts a PHD-type; atypical zinc-finger fold; sequence QSYCTICCGGREVLMCGNNNCCRCFCVECVDLLVGPGAAQAAIKEDPWNCYMCGHKG. Residues 634–912 enclose the SAM-dependent MTase C5-type domain; that stretch reads IRVLSLFDGI…APLKEYFACV (279 aa). S-adenosyl-L-methionine contacts are provided by residues 641–645, Glu664, and 686–688; these read DGIAT and DVR. Cys710 is a catalytic residue. Cys710 is subject to S-methylcysteine; by autocatalysis. 891–893 provides a ligand contact to S-adenosyl-L-methionine; sequence RSW.

It belongs to the class I-like SAM-binding methyltransferase superfamily. C5-methyltransferase family. In terms of assembly, heterotetramer composed of 1 DNMT3A homodimer and 2 DNMT3L subunits (DNMT3L-DNMT3A-DNMT3A-DNMT3L). Interacts with UBC9, PIAS1 and PIAS2. Binds the ZBTB18 transcriptional repressor. Interacts with SETDB1. Associates with HDAC1 through its ADD domain. Interacts with UHRF1. Interacts with DNMT1 and DNMT3B. Interacts with the PRC2/EED-EZH2 complex. Interacts with MPHOSPH8. Interacts with histone H3 that is not methylated at 'Lys-4' (H3K4). Interacts with SPOCD1. Interacts with ZNF263; recruited to the SIX3 promoter along with other proteins involved in chromatin modification and transcriptional corepression where it contributes to transcriptional repression. Sumoylated; sumoylation disrupts the ability to interact with histone deacetylases (HDAC1 and HDAC2) and repress transcription. Post-translationally, auto-methylated at Cys-710: auto-methylation takes place in absence of DNA substrate and inactivates the DNA methyltransferase activity. Inactivation by auto-methylation may be used to inactivate unused DNA methyltransferases in the cell. In terms of tissue distribution, highly expressed in fetal tissues, skeletal muscle, heart, peripheral blood mononuclear cells, kidney, and at lower levels in placenta, brain, liver, colon, spleen, small intestine and lung.

The protein localises to the nucleus. It is found in the chromosome. The protein resides in the cytoplasm. The catalysed reaction is a 2'-deoxycytidine in DNA + S-adenosyl-L-methionine = a 5-methyl-2'-deoxycytidine in DNA + S-adenosyl-L-homocysteine + H(+). It carries out the reaction L-cysteinyl-[protein] + S-adenosyl-L-methionine = S-methyl-L-cysteinyl-[protein] + S-adenosyl-L-homocysteine + H(+). With respect to regulation, activated by binding to the regulatory factor DNMT3L. Auto-methylation at Cys-710 in absence of DNA inactivates the DNA methyltransferase activity. Its function is as follows. Required for genome-wide de novo methylation and is essential for the establishment of DNA methylation patterns during development. DNA methylation is coordinated with methylation of histones. It modifies DNA in a non-processive manner and also methylates non-CpG sites. May preferentially methylate DNA linker between 2 nucleosomal cores and is inhibited by histone H1. Plays a role in paternal and maternal imprinting. Required for methylation of most imprinted loci in germ cells. Acts as a transcriptional corepressor for ZBTB18. Recruited to trimethylated 'Lys-36' of histone H3 (H3K36me3) sites. Can actively repress transcription through the recruitment of HDAC activity. Also has weak auto-methylation activity on Cys-710 in absence of DNA. This chain is DNA (cytosine-5)-methyltransferase 3A (DNMT3A), found in Homo sapiens (Human).